The sequence spans 122 residues: ORF7a protein (122 aa).

The N-terminal stretch at 1 to 15 (MKIILFLTLIVFTSC) is a signal peptide. An X4e domain is found at 16–81 (ELYHYQECVR…RHTYQLRARS (66 aa)). Residues 16-96 (ELYHYQECVR…FIRQEEVQQE (81 aa)) are Virion surface-facing. Disulfide bonds link C23–C58 and C35–C67. A helical transmembrane segment spans residues 97–117 (LYSPLFLIVAALVFLILCFTI). Residues 118–122 (KRKTE) lie on the Intravirion side of the membrane. The short motif at 118 to 122 (KRKTE) is the Di-lysine motif element.

In terms of assembly, interacts with the spike glycoprotein. Interacts with M protein. Interacts with E protein. Interacts with the ORF3a protein. Interacts with human SGT. Interacts with host ITGAL. Interacts with host BST2.

The protein resides in the virion. It is found in the host endoplasmic reticulum membrane. It localises to the host endoplasmic reticulum-Golgi intermediate compartment membrane. Its subcellular location is the host Golgi apparatus membrane. In terms of biological role, plays a role as antagonist of host tetherin (BST2), disrupting its antiviral effect. Acts by binding to BST2 thereby interfering with its glycosylation. May suppress small interfering RNA (siRNA). May bind to host ITGAL, thereby playing a role in attachment or modulation of leukocytes. The chain is ORF7a protein from Severe acute respiratory syndrome coronavirus (SARS-CoV).